Reading from the N-terminus, the 580-residue chain is 3-(3-hydroxy-phenyl)propionate/3-hydroxycinnamic acid hydroxylase (580 aa).

FAD-binding positions include 14–43 and 291–301; these read DVLV…VVEE and FRRGRLLLAGD.

It belongs to the PheA/TfdB FAD monooxygenase family. FAD is required as a cofactor.

The enzyme catalyses 3-(3-hydroxyphenyl)propanoate + NADH + O2 + H(+) = 3-(2,3-dihydroxyphenyl)propanoate + NAD(+) + H2O. It carries out the reaction (2E)-3-(3-hydroxyphenyl)prop-2-enoate + NADH + O2 + H(+) = (2E)-3-(2,3-dihydroxyphenyl)prop-2-enoate + NAD(+) + H2O. The protein operates within aromatic compound metabolism; 3-phenylpropanoate degradation. Functionally, catalyzes the insertion of one atom of molecular oxygen into position 2 of the phenyl ring of 3-(3-hydroxyphenyl)propionate (3-HPP) and hydroxycinnamic acid (3HCI). This Mycobacterium avium (strain 104) protein is 3-(3-hydroxy-phenyl)propionate/3-hydroxycinnamic acid hydroxylase.